The following is a 503-amino-acid chain: Aminoaldehyde dehydrogenase 2, peroxisomal (503 aa).

3 residues coordinate Na(+): isoleucine 28, aspartate 99, and leucine 189. 238 to 245 (GSTMTGSK) lines the NAD(+) pocket. Residue glutamate 260 is the Proton acceptor of the active site. NAD(+) contacts are provided by cysteine 294 and glutamate 393. The Nucleophile role is filled by cysteine 294. Positions 501–503 (SKL) match the Microbody targeting signal motif.

The protein belongs to the aldehyde dehydrogenase family. As to expression, expressed in leaves, flowers and fruits.

Its subcellular location is the peroxisome. The enzyme catalyses 4-aminobutanal + NAD(+) + H2O = 4-aminobutanoate + NADH + 2 H(+). It carries out the reaction 3-aminopropanal + NAD(+) + H2O = beta-alanine + NADH + 2 H(+). Its pathway is amine and polyamine biosynthesis; betaine biosynthesis via choline pathway; betaine from betaine aldehyde: step 1/1. Dehydrogenase that catalyzes the oxidation of several aminoaldehydes. Metabolizes and detoxifies aldehyde products of polyamine degradation to non-toxic amino acids. Catalyzes the oxidation of 4-aminobutanal and 3-aminopropanal to 4-aminobutanoate and beta-alanine, respectively. The polypeptide is Aminoaldehyde dehydrogenase 2, peroxisomal (Malus domestica (Apple)).